A 365-amino-acid chain; its full sequence is Flagellar P-ring protein (365 aa).

The first 19 residues, 1–19 (MIKFLSALILLLVTTAAQA), serve as a signal peptide directing secretion.

It belongs to the FlgI family. The basal body constitutes a major portion of the flagellar organelle and consists of four rings (L,P,S, and M) mounted on a central rod.

The protein resides in the periplasm. The protein localises to the bacterial flagellum basal body. Its function is as follows. Assembles around the rod to form the L-ring and probably protects the motor/basal body from shearing forces during rotation. The protein is Flagellar P-ring protein of Shigella dysenteriae serotype 1 (strain Sd197).